We begin with the raw amino-acid sequence, 238 residues long: tRNA1(Val) (adenine(37)-N6)-methyltransferase (238 aa).

It belongs to the methyltransferase superfamily. tRNA (adenine-N(6)-)-methyltransferase family.

Its subcellular location is the cytoplasm. It catalyses the reaction adenosine(37) in tRNA1(Val) + S-adenosyl-L-methionine = N(6)-methyladenosine(37) in tRNA1(Val) + S-adenosyl-L-homocysteine + H(+). In terms of biological role, specifically methylates the adenine in position 37 of tRNA(1)(Val) (anticodon cmo5UAC). The polypeptide is tRNA1(Val) (adenine(37)-N6)-methyltransferase (Shewanella baltica (strain OS195)).